Consider the following 389-residue polypeptide: S-adenosylmethionine synthase (389 aa).

H15 lines the ATP pocket. D17 lines the Mg(2+) pocket. Position 43 (E43) interacts with K(+). Residues E56 and Q99 each coordinate L-methionine. The tract at residues 99-109 (QSPDIAQGVNE) is flexible loop. ATP-binding positions include 166–168 (DAK), 234–235 (RF), D243, 249–250 (RK), A266, and K270. Position 243 (D243) interacts with L-methionine. K274 provides a ligand contact to L-methionine.

The protein belongs to the AdoMet synthase family. In terms of assembly, homotetramer; dimer of dimers. The cofactor is Mg(2+). Requires K(+) as cofactor.

It localises to the cytoplasm. The catalysed reaction is L-methionine + ATP + H2O = S-adenosyl-L-methionine + phosphate + diphosphate. Its pathway is amino-acid biosynthesis; S-adenosyl-L-methionine biosynthesis; S-adenosyl-L-methionine from L-methionine: step 1/1. Its function is as follows. Catalyzes the formation of S-adenosylmethionine (AdoMet) from methionine and ATP. The overall synthetic reaction is composed of two sequential steps, AdoMet formation and the subsequent tripolyphosphate hydrolysis which occurs prior to release of AdoMet from the enzyme. The sequence is that of S-adenosylmethionine synthase from Neisseria meningitidis serogroup C (strain 053442).